We begin with the raw amino-acid sequence, 220 residues long: MFDITPIRVFGTSSIGVFIATNNTVTFIPPDVPEKIDDAVRNTLRTSVARFTVARSPLLGIFTVVNDNGVLLPPLVLEEEVRLFKALGLNVDIINTKYTAISNLILAGNKVALVSPLLEPSARKVVADVLGVEVIVDTIAGNPLVGALAVLNSRGLLVAPEATDDDLKKLSEYFKVRVDVGTVNRGKSFLRGGIVVNDNGALVGDETAGPELMRMQQVLG.

Belongs to the eIF-6 family.

Its function is as follows. Binds to the 50S ribosomal subunit and prevents its association with the 30S ribosomal subunit to form the 70S initiation complex. This chain is Translation initiation factor 6, found in Pyrobaculum aerophilum (strain ATCC 51768 / DSM 7523 / JCM 9630 / CIP 104966 / NBRC 100827 / IM2).